A 408-amino-acid chain; its full sequence is Probable serine/threonine-protein kinase PBL16 (408 aa).

Gly2 carries N-myristoyl glycine lipidation. A lipid anchor (S-palmitoyl cysteine) is attached at Cys4. Residues 17-50 (ANAKSESPKEQSPTVEDKHIKEVQKLPSNPKEVE) form a disordered region. Residues 18–30 (NAKSESPKEQSPT) are compositionally biased toward polar residues. Positions 31 to 40 (VEDKHIKEVQ) are enriched in basic and acidic residues. Thr65 is subject to Phosphothreonine. A Protein kinase domain is found at 76–360 (FRQDRVLGGG…DIVDSLEPLQ (285 aa)). ATP contacts are provided by residues 82–90 (LGGGGFGSV) and Lys113. Phosphotyrosine is present on Tyr159. Asp209 serves as the catalytic Proton acceptor. Residues Ser213 and Ser243 each carry the phosphoserine modification. A phosphothreonine mark is found at Thr244 and Thr249. Residue Tyr257 is modified to Phosphotyrosine.

It belongs to the protein kinase superfamily. Ser/Thr protein kinase family. Post-translationally, palmitoylation at Cys-4 and Cys-6 are required for plasma membrane location.

It localises to the cell membrane. The enzyme catalyses L-seryl-[protein] + ATP = O-phospho-L-seryl-[protein] + ADP + H(+). The catalysed reaction is L-threonyl-[protein] + ATP = O-phospho-L-threonyl-[protein] + ADP + H(+). Functionally, may be involved in plant defense signaling. The polypeptide is Probable serine/threonine-protein kinase PBL16 (Arabidopsis thaliana (Mouse-ear cress)).